A 94-amino-acid chain; its full sequence is Ig kappa-B5 chain V region 2699 (94 aa).

The interval 1-23 (AFELTQTPSSVEAAVGGTVTINC) is framework-1. Positions 24-34 (QASTDISSNLA) are complementarity-determining-1. Residues 35 to 49 (WYTPKPGSPPKLLIY) form a framework-2 region. Residues 50-56 (SASTLAS) form a complementarity-determining-2 region. The segment at 57–82 (GVSSRFKGSGSGVLITLTISDLECGV) is framework-3. Residue Ser-83 is a region of interest, complementarity-determining-3. The segment at 84-93 (FGGGTKVVVE) is framework-4.

The polypeptide is Ig kappa-B5 chain V region 2699 (Oryctolagus cuniculus (Rabbit)).